Consider the following 271-residue polypeptide: Shikimate dehydrogenase (NADP(+)) (271 aa).

Residues 14-16 (SKS) and T61 each bind shikimate. The active-site Proton acceptor is K65. Residues N86 and D102 each contribute to the shikimate site. NADP(+)-binding positions include 126–130 (GAGGA), 149–154 (NRTFSR), and M213. Y215 is a binding site for shikimate. Residue G238 coordinates NADP(+).

Belongs to the shikimate dehydrogenase family. Homodimer.

It carries out the reaction shikimate + NADP(+) = 3-dehydroshikimate + NADPH + H(+). It participates in metabolic intermediate biosynthesis; chorismate biosynthesis; chorismate from D-erythrose 4-phosphate and phosphoenolpyruvate: step 4/7. Functionally, involved in the biosynthesis of the chorismate, which leads to the biosynthesis of aromatic amino acids. Catalyzes the reversible NADPH linked reduction of 3-dehydroshikimate (DHSA) to yield shikimate (SA). This Histophilus somni (strain 2336) (Haemophilus somnus) protein is Shikimate dehydrogenase (NADP(+)).